The sequence spans 627 residues: DEAD-box ATP-dependent RNA helicase 35A (627 aa).

2 stretches are compositionally biased toward low complexity: residues 1–15 (MAAATASSPATAAAA) and 52–61 (SSSAAEAASD). Disordered stretches follow at residues 1 to 23 (MAAATASSPATAAAANSDDEDNY) and 40 to 85 (LRRL…LEAS). A compositionally biased stretch (pro residues) spans 62 to 72 (LPPPPPPPPNQ). Positions 182–210 (RDFRDLRLPEPMLRKLREKGIVQPTPIQV) match the Q motif motif. In terms of domain architecture, Helicase ATP-binding spans 213–397 (LPVVLSGRDM…KSALVKPVIV (185 aa)). Residue 226–233 (AFTGSGKT) coordinates ATP. The short motif at 345–348 (DEAD) is the DEAD box element. The Helicase C-terminal domain maps to 408–568 (DVIQEVEYVK…RIPPVLAELN (161 aa)). The CCHC-type zinc-finger motif lies at 584–601 (KGCAYCGGLGHRVTDCPK).

This sequence belongs to the DEAD box helicase family. DDX41 subfamily.

It catalyses the reaction ATP + H2O = ADP + phosphate + H(+). The protein is DEAD-box ATP-dependent RNA helicase 35A of Oryza sativa subsp. japonica (Rice).